The primary structure comprises 77 residues: NAD(P)H-quinone oxidoreductase subunit L (77 aa).

2 helical membrane-spanning segments follow: residues 12 to 32 and 47 to 67; these read LVAY…ILFY and LIVY…SPFL.

The protein belongs to the complex I NdhL subunit family. NDH-1 can be composed of about 15 different subunits; different subcomplexes with different compositions have been identified which probably have different functions.

The protein resides in the cellular thylakoid membrane. It carries out the reaction a plastoquinone + NADH + (n+1) H(+)(in) = a plastoquinol + NAD(+) + n H(+)(out). The catalysed reaction is a plastoquinone + NADPH + (n+1) H(+)(in) = a plastoquinol + NADP(+) + n H(+)(out). In terms of biological role, NDH-1 shuttles electrons from an unknown electron donor, via FMN and iron-sulfur (Fe-S) centers, to quinones in the respiratory and/or the photosynthetic chain. The immediate electron acceptor for the enzyme in this species is believed to be plastoquinone. Couples the redox reaction to proton translocation, and thus conserves the redox energy in a proton gradient. Cyanobacterial NDH-1 also plays a role in inorganic carbon-concentration. The chain is NAD(P)H-quinone oxidoreductase subunit L from Prochlorococcus marinus subsp. pastoris (strain CCMP1986 / NIES-2087 / MED4).